The sequence spans 295 residues: Protein FAM221A (295 aa).

Positions 244–295 (SEPPGIDKQVSSMRLSEEDDMAYFERRYQERLRKEKEHKRQKNSKPPTTQRP) are disordered. Over residues 266 to 278 (YFERRYQERLRKE) the composition is skewed to basic and acidic residues.

It belongs to the FAM221 family.

The sequence is that of Protein FAM221A (fam221a) from Xenopus laevis (African clawed frog).